The sequence spans 939 residues: Valine--tRNA ligase (939 aa).

The short motif at 47-57 is the 'HIGH' region element; the sequence is PNVTGILHMGH. The 'KMSKS' region motif lies at 563-567; sequence KLSKS. Residue Lys566 participates in ATP binding. Residues 874–939 are a coiled coil; that stretch reads EHLAKERVRL…QSILDKLASL (66 aa).

This sequence belongs to the class-I aminoacyl-tRNA synthetase family. ValS type 1 subfamily. As to quaternary structure, monomer.

The protein localises to the cytoplasm. It carries out the reaction tRNA(Val) + L-valine + ATP = L-valyl-tRNA(Val) + AMP + diphosphate. Catalyzes the attachment of valine to tRNA(Val). As ValRS can inadvertently accommodate and process structurally similar amino acids such as threonine, to avoid such errors, it has a 'posttransfer' editing activity that hydrolyzes mischarged Thr-tRNA(Val) in a tRNA-dependent manner. The protein is Valine--tRNA ligase of Chlamydia trachomatis serovar L2 (strain ATCC VR-902B / DSM 19102 / 434/Bu).